Reading from the N-terminus, the 229-residue chain is Demethylmenaquinone methyltransferase (229 aa).

Residues threonine 57, aspartate 77, and 101–102 (DV) contribute to the S-adenosyl-L-methionine site.

Belongs to the class I-like SAM-binding methyltransferase superfamily. MenG/UbiE family.

It catalyses the reaction a 2-demethylmenaquinol + S-adenosyl-L-methionine = a menaquinol + S-adenosyl-L-homocysteine + H(+). Its pathway is quinol/quinone metabolism; menaquinone biosynthesis; menaquinol from 1,4-dihydroxy-2-naphthoate: step 2/2. Its function is as follows. Methyltransferase required for the conversion of demethylmenaquinol (DMKH2) to menaquinol (MKH2). The chain is Demethylmenaquinone methyltransferase from Chlamydia muridarum (strain MoPn / Nigg).